Here is a 418-residue protein sequence, read N- to C-terminus: MEEVSSCSLRSTLFQQEEQNRITYRIPALLYIPPTHTFLAFAEMRTSSRDEDAVYLVFRRGVMKGCSVEWGPQQPLMEATLPGHRTMSPCPVWEKNTGRVYLFFICVQGHVSERWQLLWGRNAARLCFLYSEDSGCSWGEVKDLTEEVVGSEMKHWATFAVGPGHGIQLQSGRLLIPAYAYLISCWFLCFPCSVKPHSLMFYSDDLGVTWHCGKFIKPQVTGECQVAEVPGKAGNLVLYCSARTPNKFRAEAFSTDSGDCFQKPTLNQQLCEPRGGCQGSVVSTRPLKMPYTCQDSSGKDVPSTQKCPLMDRSLEVEEGAGAPSGTWLLYSHPTNKKKRMNLGIYYNQNPLEVNYWSRPWILNRGPSGYSDLAVVEGQGLFACLFECGERHEDEKIDFCLFSDQEVLSCDDCTSPSSN.

The FRIP motif motif lies at 24–27 (YRIP). Substrate-binding residues include R25 and R45. Residue D50 is the Proton acceptor of the active site. The stretch at 129-140 (LYSEDSGCSWGE) is one BNR 1 repeat. Positions 179 and 181 each coordinate substrate. A BNR 2 repeat occupies 201–212 (FYSDDLGVTWHC). Substrate contacts are provided by E223 and R243. The BNR 3 repeat unit spans residues 252–263 (AFSTDSGDCFQK). R339 serves as a coordination point for substrate. Y369 functions as the Nucleophile in the catalytic mechanism. E386 is a catalytic residue.

Belongs to the glycosyl hydrolase 33 family. As to quaternary structure, interacts with CAV1; this interaction enhances NEU3 sialidase activity within caveola. Interacts with EGFR; this interaction mediates desialylation of EGFR enhancing downstream signaling. Post-translationally, palmitoylated; may regulate intracellular trafficking and anchorage to plasma membrane and endomembranes. In terms of tissue distribution, expressed in brain, cardiac muscle and weakly in liver.

It localises to the cell membrane. Its subcellular location is the membrane. The protein resides in the caveola. It is found in the early endosome membrane. The protein localises to the recycling endosome membrane. It localises to the lysosome membrane. It carries out the reaction Hydrolysis of alpha-(2-&gt;3)-, alpha-(2-&gt;6)-, alpha-(2-&gt;8)- glycosidic linkages of terminal sialic acid residues in oligosaccharides, glycoproteins, glycolipids, colominic acid and synthetic substrates.. The enzyme catalyses a ganglioside GD1a + H2O = a ganglioside GM1 + N-acetylneuraminate. It catalyses the reaction a ganglioside GD1a (d18:1(4E)) + H2O = a ganglioside GM1 (d18:1(4E)) + N-acetylneuraminate. The catalysed reaction is a ganglioside GD1b + H2O = a ganglioside GM1 + N-acetylneuraminate. It carries out the reaction a ganglioside GD1b (d18:1(4E)) + H2O = a ganglioside GM1 (d18:1(4E)) + N-acetylneuraminate. The enzyme catalyses a ganglioside GD3 + H2O = a ganglioside GM3 + N-acetylneuraminate. It catalyses the reaction a ganglioside GD3 (d18:1(4E)) + H2O = a ganglioside GM3 (d18:1(4E)) + N-acetylneuraminate. The catalysed reaction is a ganglioside GM3 + H2O = a beta-D-galactosyl-(1-&gt;4)-beta-D-glucosyl-(1&lt;-&gt;1)-ceramide + N-acetylneuraminate. It carries out the reaction a ganglioside GM1 + H2O = a ganglioside GA1 + N-acetylneuraminate. The enzyme catalyses a ganglioside GM1 (d18:1(4E)) + H2O = a ganglioside GA1 (d18:1(4E)) + N-acetylneuraminate. It catalyses the reaction a ganglioside GM2 (d18:1(4E)) + H2O = a ganglioside GA2 (d18:1(4E)) + N-acetylneuraminate. The catalysed reaction is a ganglioside GM3 (d18:1(4E)) + H2O = a beta-D-Gal-(1-&gt;4)-beta-D-Glc-(1&lt;-&gt;1)-Cer(d18:1(4E)) + N-acetylneuraminate. It carries out the reaction a ganglioside GT1b + H2O = a ganglioside GD1b + N-acetylneuraminate. Exo-alpha-sialidase that catalyzes the hydrolytic cleavage of the terminal sialic acid (N-acetylneuraminic acid, Neu5Ac) of a glycan moiety in the catabolism of glycolipids, glycoproteins and oligosacharides. Displays high catalytic efficiency for gangliosides including alpha-(2-&gt;3)-sialylated GD1a and GM3 and alpha-(2-&gt;8)-sialylated GD3. Plays a role in the regulation of transmembrane signaling through the modulation of ganglioside content of the lipid bilayer and by direct interaction with signaling receptors, such as EGFR. Desialylates EGFR and activates downstream signaling in proliferating cells. Contributes to clathrin-mediated endocytosis by regulating sorting of endocytosed receptors to early and recycling endosomes. The protein is Sialidase-3 (Neu3) of Rattus norvegicus (Rat).